We begin with the raw amino-acid sequence, 882 residues long: Alanine--tRNA ligase (882 aa).

Positions 570, 574, 672, and 676 each coordinate Zn(2+).

The protein belongs to the class-II aminoacyl-tRNA synthetase family. The cofactor is Zn(2+).

It localises to the cytoplasm. The enzyme catalyses tRNA(Ala) + L-alanine + ATP = L-alanyl-tRNA(Ala) + AMP + diphosphate. In terms of biological role, catalyzes the attachment of alanine to tRNA(Ala) in a two-step reaction: alanine is first activated by ATP to form Ala-AMP and then transferred to the acceptor end of tRNA(Ala). Also edits incorrectly charged Ser-tRNA(Ala) and Gly-tRNA(Ala) via its editing domain. The chain is Alanine--tRNA ligase from Xanthomonas campestris pv. campestris (strain 8004).